A 153-amino-acid chain; its full sequence is Bursicon (153 aa).

The N-terminal stretch at 1 to 22 (MLLYHIVGASVLICLLNETAKA) is a signal peptide. 5 disulfide bridges follow: cysteine 29–cysteine 78, cysteine 43–cysteine 92, cysteine 53–cysteine 113, cysteine 57–cysteine 115, and cysteine 75–cysteine 118. The 91-residue stretch at 29–119 (CQATPVIHFL…PLECMCRPCT (91 aa)) folds into the CTCK domain.

Heterodimer of burs and pburs.

It is found in the secreted. Final heterodimeric neurohormone released at the end of the molting cycle, involved in the sclerotization (tanning) of the insect cuticle, melanization and wing spreading. The sequence is that of Bursicon from Apis mellifera (Honeybee).